Here is a 384-residue protein sequence, read N- to C-terminus: Multidrug/solvent efflux pump periplasmic linker protein MepA (384 aa).

Residues 1–22 (MQFKPAVTALVSAVALATLLSG) form the signal peptide. Cysteine 23 carries the N-palmitoyl cysteine lipid modification. Cysteine 23 carries S-diacylglycerol cysteine lipidation. Residues 115-155 (LAERYKQLIDEQAVSKQEYDDANAKRLQAEASLKSAQIDLR) are a coiled coil. The interval 362–384 (ATNVKKPAGPDQANAAKADAKAE) is disordered. Low complexity predominate over residues 368–378 (PAGPDQANAAK).

It belongs to the membrane fusion protein (MFP) (TC 8.A.1) family.

It is found in the cell inner membrane. Its function is as follows. The periplasmic linker protein component of an organic solvent and antibiotic efflux pump; confers resistance to toluene, hexane, p-xylene, ampicillin, penicillin G, erythromycin, novobiocin and tetracycline. This chain is Multidrug/solvent efflux pump periplasmic linker protein MepA (mepA), found in Pseudomonas putida (Arthrobacter siderocapsulatus).